A 414-amino-acid chain; its full sequence is TAR DNA-binding protein 43 (414 aa).

Glycyl lysine isopeptide (Lys-Gly) (interchain with G-Cter in SUMO2) cross-links involve residues Lys79, Lys84, Lys95, Lys102, and Lys181. RRM domains lie at 104 to 200 (SDLI…RCTE) and 191 to 262 (RKVF…NAEP). A Phosphoserine modification is found at Ser183. Positions 216–414 (EVVDVFIPKP…MDSKSSGWGM (199 aa)) are interaction with UBQLN2. Positions 261–274 (EPKHNSNRQLERSG) are enriched in basic and acidic residues. Disordered stretches follow at residues 261–301 (EPKH…GLGN) and 341–414 (ASQQ…GWGM). Lys263 participates in a covalent cross-link: Glycyl lysine isopeptide (Lys-Gly) (interchain with G-Cter in SUMO2). A compositionally biased stretch (gly residues) spans 275-301 (RFGGNPGGFGNQGGFGNSRGGGAGLGN). A Phosphoserine modification is found at Ser292. Arg293 carries the post-translational modification Omega-N-methylarginine. Low complexity-rich tracts occupy residues 342-358 (SQQN…SQGS) and 368-392 (GSGN…SNAG). The span at 393–402 (SGSGFNGGFG) shows a compositional bias: gly residues. The span at 405 to 414 (MDSKSSGWGM) shows a compositional bias: polar residues.

In terms of assembly, homodimer. Homooligomer (via its N-terminal domain). Interacts with BRDT. Binds specifically to pyrimidine-rich motifs of TAR DNA and to single stranded TG repeated sequences. Binds to RNA, specifically to UG repeated sequences with a minimum of six contiguous repeats. Interacts with ATXN2; the interaction is RNA-dependent. Interacts with MATR3. Interacts with UBQLN2. Interacts with HNRNPA2B1. Interacts with ZNF106. Interacts with CNOT7/CAF1. Interacts with CRY2. Interacts with PPIA/CYPA; the interaction is dependent on RNA-binding activity of TARDBP and PPIase activity of PPIA/CYPA. Acetylation of PPIA/CYPA at 'Lys-125' favors the interaction of TARDBP with PPIA/CYPA. Hyperphosphorylated. Post-translationally, ubiquitinated.

It localises to the nucleus. The protein resides in the cytoplasm. It is found in the stress granule. Its subcellular location is the mitochondrion. RNA-binding protein that is involved in various steps of RNA biogenesis and processing. Preferentially binds, via its two RNA recognition motifs RRM1 and RRM2, to GU-repeats on RNA molecules predominantly localized within long introns and in the 3'UTR of mRNAs. In turn, regulates the splicing of many non-coding and protein-coding RNAs including proteins involved in neuronal survival, as well as mRNAs that encode proteins relevant for neurodegenerative diseases. Plays a role in maintaining mitochondrial homeostasis by regulating the processing of mitochondrial transcripts. Also regulates mRNA stability by recruiting CNOT7/CAF1 deadenylase on mRNA 3'UTR leading to poly(A) tail deadenylation and thus shortening. In response to oxidative insult, associates with stalled ribosomes localized to stress granules (SGs) and contributes to cell survival. Also participates in the normal skeletal muscle formation and regeneration, forming cytoplasmic myo-granules and binding mRNAs that encode sarcomeric proteins. Plays a role in the maintenance of the circadian clock periodicity via stabilization of the CRY1 and CRY2 proteins in a FBXL3-dependent manner. Negatively regulates the expression of CDK6. Regulates the expression of HDAC6, ATG7 and VCP in a PPIA/CYPA-dependent manner. This chain is TAR DNA-binding protein 43 (Tardbp), found in Mus musculus (Mouse).